We begin with the raw amino-acid sequence, 244 residues long: tRNA pseudouridine synthase A (244 aa).

The active-site Nucleophile is the aspartate 52. A substrate-binding site is contributed by tyrosine 110.

The protein belongs to the tRNA pseudouridine synthase TruA family. Homodimer.

The catalysed reaction is uridine(38/39/40) in tRNA = pseudouridine(38/39/40) in tRNA. In terms of biological role, formation of pseudouridine at positions 38, 39 and 40 in the anticodon stem and loop of transfer RNAs. In Clostridium botulinum (strain Eklund 17B / Type B), this protein is tRNA pseudouridine synthase A.